The following is a 110-amino-acid chain: Ribonuclease P protein component 1 (110 aa).

This sequence belongs to the eukaryotic/archaeal RNase P protein component 1 family. Consists of a catalytic RNA component and at least 4-5 protein subunits.

The protein resides in the cytoplasm. The enzyme catalyses Endonucleolytic cleavage of RNA, removing 5'-extranucleotides from tRNA precursor.. Functionally, part of ribonuclease P, a protein complex that generates mature tRNA molecules by cleaving their 5'-ends. The chain is Ribonuclease P protein component 1 from Methanosarcina barkeri (strain Fusaro / DSM 804).